Consider the following 220-residue polypeptide: 7-cyano-7-deazaguanine synthase (220 aa).

7-17 (ISGGMDSSTAA) serves as a coordination point for ATP. Zn(2+) is bound by residues cysteine 187, cysteine 195, cysteine 198, and cysteine 201.

It belongs to the QueC family. Zn(2+) is required as a cofactor.

The enzyme catalyses 7-carboxy-7-deazaguanine + NH4(+) + ATP = 7-cyano-7-deazaguanine + ADP + phosphate + H2O + H(+). It participates in purine metabolism; 7-cyano-7-deazaguanine biosynthesis. Its function is as follows. Catalyzes the ATP-dependent conversion of 7-carboxy-7-deazaguanine (CDG) to 7-cyano-7-deazaguanine (preQ(0)). This Campylobacter hominis (strain ATCC BAA-381 / DSM 21671 / CCUG 45161 / LMG 19568 / NCTC 13146 / CH001A) protein is 7-cyano-7-deazaguanine synthase.